The primary structure comprises 89 residues: Small ribosomal subunit protein uS14A (89 aa).

It belongs to the universal ribosomal protein uS14 family. As to quaternary structure, part of the 30S ribosomal subunit. Contacts proteins S3 and S10.

Binds 16S rRNA, required for the assembly of 30S particles and may also be responsible for determining the conformation of the 16S rRNA at the A site. In Lactococcus lactis subsp. lactis (strain IL1403) (Streptococcus lactis), this protein is Small ribosomal subunit protein uS14A.